Here is a 910-residue protein sequence, read N- to C-terminus: DNA mismatch repair protein MutS (910 aa).

Residues 1 to 11 show a composition bias toward basic and acidic residues; it reads MEAKVEEKEPE. The tract at residues 1 to 21 is disordered; sequence MEAKVEEKEPEPVENAGPDAP. An ATP-binding site is contributed by 658-665; the sequence is GPNMGGKS.

This sequence belongs to the DNA mismatch repair MutS family.

In terms of biological role, this protein is involved in the repair of mismatches in DNA. It is possible that it carries out the mismatch recognition step. This protein has a weak ATPase activity. The chain is DNA mismatch repair protein MutS from Brucella suis (strain ATCC 23445 / NCTC 10510).